Here is a 447-residue protein sequence, read N- to C-terminus: MAGATEGEDTKVIESKINELNIDKPKLEDNNEAKGNGNGNESGGDDDDDKEDDDDNDEITEPSTSTSSGDKKKKKNKNKKKKKKKIVSIDSSYPEGIFPEGQWMEYPLEDINSYRTTSEEKRYLDRQQNNKWQDFRKGAEIHRRVRHKAQSSIRPGMTMIEIANLIEDSVRNYSGNDHTLKAGIGFPTGLSLNHVAAHYTPNTGDKLILKKDDIMKVDIGVHVNGRICDSAFTMTFNEDGKYDTIMQAVKEATYTGIKESGIDVRLNDIGAAIQEVMESYEMEENGKTYPIKCIKNLNGHNIDDFVIHSGKSVPIIANGDMTKMEEGETFAIETFGSTGNGYVLPEGECSHYAMNKGVEHLKPPSERSKQLLETIKQNFGTLPWCRRYLERTGEEKYLFALNQLVRHGIVEEYPPIVDKRGSYTAQFEHTILLHPHKKEVVTKGDDY.

The tract at residues 1–86 (MAGATEGEDT…KNKKKKKKKI (86 aa)) is disordered. The span at 8–32 (EDTKVIESKINELNIDKPKLEDNNE) shows a compositional bias: basic and acidic residues. A compositionally biased stretch (acidic residues) spans 43–60 (GGDDDDDKEDDDDNDEIT). Over residues 71 to 86 (KKKKKNKNKKKKKKKI) the composition is skewed to basic residues. A substrate-binding site is contributed by histidine 198. Residues aspartate 218, aspartate 229, and histidine 300 each contribute to the a divalent metal cation site. Substrate is bound at residue histidine 308. A divalent metal cation contacts are provided by glutamate 333 and glutamate 428.

Belongs to the peptidase M24A family. Methionine aminopeptidase eukaryotic type 2 subfamily. Co(2+) serves as cofactor. It depends on Zn(2+) as a cofactor. Mn(2+) is required as a cofactor. Requires Fe(2+) as cofactor.

The protein localises to the cytoplasm. It catalyses the reaction Release of N-terminal amino acids, preferentially methionine, from peptides and arylamides.. Its function is as follows. Cotranslationally removes the N-terminal methionine from nascent proteins. The N-terminal methionine is often cleaved when the second residue in the primary sequence is small and uncharged (Met-Ala-, Cys, Gly, Pro, Ser, Thr, or Val). This chain is Methionine aminopeptidase 2, found in Candida albicans (strain WO-1) (Yeast).